Here is a 130-residue protein sequence, read N- to C-terminus: Small ribosomal subunit protein uS11 (130 aa).

It belongs to the universal ribosomal protein uS11 family. Part of the 30S ribosomal subunit. Interacts with proteins S7 and S18. Binds to IF-3.

Its function is as follows. Located on the platform of the 30S subunit, it bridges several disparate RNA helices of the 16S rRNA. Forms part of the Shine-Dalgarno cleft in the 70S ribosome. This Thermotoga maritima (strain ATCC 43589 / DSM 3109 / JCM 10099 / NBRC 100826 / MSB8) protein is Small ribosomal subunit protein uS11.